Consider the following 805-residue polypeptide: Leucine--tRNA ligase (805 aa).

The short motif at 40–51 (PYPSGAGLHVGH) is the 'HIGH' region element. A 'KMSKS' region motif is present at residues 576 to 580 (KMSKS). An ATP-binding site is contributed by lysine 579.

It belongs to the class-I aminoacyl-tRNA synthetase family.

It localises to the cytoplasm. It catalyses the reaction tRNA(Leu) + L-leucine + ATP = L-leucyl-tRNA(Leu) + AMP + diphosphate. The polypeptide is Leucine--tRNA ligase (Anoxybacillus flavithermus (strain DSM 21510 / WK1)).